The following is a 211-amino-acid chain: Ribosomal RNA small subunit methyltransferase G (211 aa).

S-adenosyl-L-methionine is bound by residues Gly-79, Leu-84, 130 to 131, and Arg-145; that span reads VE.

It belongs to the methyltransferase superfamily. RNA methyltransferase RsmG family.

The protein resides in the cytoplasm. The catalysed reaction is guanosine(527) in 16S rRNA + S-adenosyl-L-methionine = N(7)-methylguanosine(527) in 16S rRNA + S-adenosyl-L-homocysteine. Specifically methylates the N7 position of guanine in position 527 of 16S rRNA. This is Ribosomal RNA small subunit methyltransferase G from Alteromonas mediterranea (strain DSM 17117 / CIP 110805 / LMG 28347 / Deep ecotype).